The sequence spans 146 residues: Cytochrome c-556 (146 aa).

An N-terminal signal peptide occupies residues 1–24 (MCMKLKTITAAMLFGCLCAGAVYA). Heme c-binding residues include M35, C135, C138, and H139.

As to quaternary structure, monomer. In terms of processing, binds 1 heme c group covalently per subunit.

Functionally, low-spin monoheme cytochrome c. The polypeptide is Cytochrome c-556 (Agrobacterium fabrum (strain C58 / ATCC 33970) (Agrobacterium tumefaciens (strain C58))).